The chain runs to 227 residues: Lipoprotein-releasing system ATP-binding protein LolD (227 aa).

Positions 6–227 (LVLDDIQKSY…RLDEGVLVSA (222 aa)) constitute an ABC transporter domain. 43 to 50 (APSGAGKS) lines the ATP pocket.

Belongs to the ABC transporter superfamily. Lipoprotein translocase (TC 3.A.1.125) family. The complex is composed of two ATP-binding proteins (LolD) and two transmembrane proteins (LolC and LolE).

The protein resides in the cell inner membrane. Its function is as follows. Part of the ABC transporter complex LolCDE involved in the translocation of mature outer membrane-directed lipoproteins, from the inner membrane to the periplasmic chaperone, LolA. Responsible for the formation of the LolA-lipoprotein complex in an ATP-dependent manner. The chain is Lipoprotein-releasing system ATP-binding protein LolD from Jannaschia sp. (strain CCS1).